The chain runs to 199 residues: Potassium-transporting ATPase KdpC subunit (199 aa).

A helical transmembrane segment spans residues P7–M27. Residues H67 to P86 form a disordered region. Positions S71–T84 are enriched in polar residues.

Belongs to the KdpC family. The system is composed of three essential subunits: KdpA, KdpB and KdpC.

The protein localises to the cell inner membrane. Its function is as follows. Part of the high-affinity ATP-driven potassium transport (or Kdp) system, which catalyzes the hydrolysis of ATP coupled with the electrogenic transport of potassium into the cytoplasm. This subunit acts as a catalytic chaperone that increases the ATP-binding affinity of the ATP-hydrolyzing subunit KdpB by the formation of a transient KdpB/KdpC/ATP ternary complex. The chain is Potassium-transporting ATPase KdpC subunit from Rhodopseudomonas palustris (strain BisB18).